The primary structure comprises 164 residues: UPF0114 protein Spro_2386 (164 aa).

Transmembrane regions (helical) follow at residues 15–35 (LLAP…IKFF), 53–73 (LVLT…LVMV), and 136–156 (LMWY…MGYL).

It belongs to the UPF0114 family.

The protein resides in the cell membrane. In Serratia proteamaculans (strain 568), this protein is UPF0114 protein Spro_2386.